A 73-amino-acid chain; its full sequence is Conotoxin im23b (73 aa).

Positions 1-22 are cleaved as a signal peptide; the sequence is MIMRMTLTLFVLVVMTAASASG. A propeptide spanning residues 23 to 28 is cleaved from the precursor; that stretch reads DALTEA. Disulfide bonds link Cys34-Cys41, Cys45-Cys55, and Cys56-Cys71.

This sequence belongs to the conotoxin K superfamily. As to expression, expressed by the venom duct.

Its subcellular location is the secreted. In terms of biological role, neurotoxin that induces excitatory symptoms in mice following intracranial administration. No symptoms are observed after intraperitoneal and intravenous (tail vein) injections. The polypeptide is Conotoxin im23b (Conus imperialis (Imperial cone)).